The following is a 33-amino-acid chain: Neutrophil defensin 1 (33 aa).

3 disulfide bridges follow: cysteine 3–cysteine 31, cysteine 5–cysteine 20, and cysteine 10–cysteine 30.

It belongs to the alpha-defensin family.

It is found in the secreted. Functionally, anti-fungal and bactericidal activity, greater against Gram-positive bacteria. This is Neutrophil defensin 1 from Mesocricetus auratus (Golden hamster).